The primary structure comprises 737 residues: DNA topoisomerase 4 subunit A (737 aa).

The Topo IIA-type catalytic domain maps to 32 to 496 (LPDVRDGLKP…SFEEVTLTNQ (465 aa)). Y120 acts as the O-(5'-phospho-DNA)-tyrosine intermediate in catalysis.

The protein belongs to the type II topoisomerase GyrA/ParC subunit family. ParC type 1 subfamily. Heterotetramer composed of ParC and ParE.

The protein resides in the cell membrane. It carries out the reaction ATP-dependent breakage, passage and rejoining of double-stranded DNA.. In terms of biological role, topoisomerase IV is essential for chromosome segregation. It relaxes supercoiled DNA. Performs the decatenation events required during the replication of a circular DNA molecule. This Rickettsia felis (strain ATCC VR-1525 / URRWXCal2) (Rickettsia azadi) protein is DNA topoisomerase 4 subunit A.